The sequence spans 429 residues: Glutamyl-tRNA reductase (429 aa).

Residues 50 to 53 (TCNR), S116, 121 to 123 (EPQ), and Q127 each bind substrate. C51 acts as the Nucleophile in catalysis. 196–201 (GAGEMA) is a binding site for NADP(+).

Belongs to the glutamyl-tRNA reductase family. Homodimer.

The catalysed reaction is (S)-4-amino-5-oxopentanoate + tRNA(Glu) + NADP(+) = L-glutamyl-tRNA(Glu) + NADPH + H(+). Its pathway is porphyrin-containing compound metabolism; protoporphyrin-IX biosynthesis; 5-aminolevulinate from L-glutamyl-tRNA(Glu): step 1/2. Its function is as follows. Catalyzes the NADPH-dependent reduction of glutamyl-tRNA(Glu) to glutamate 1-semialdehyde (GSA). The sequence is that of Glutamyl-tRNA reductase from Thermodesulfovibrio yellowstonii (strain ATCC 51303 / DSM 11347 / YP87).